Consider the following 147-residue polypeptide: Lysozyme C-1 (147 aa).

An N-terminal signal peptide occupies residues 1 to 18 (MKALLTLVFCLLPLAAQG). A C-type lysozyme domain is found at 19–147 (KVYSRCELAA…VSKWIRGCRL (129 aa)). Intrachain disulfides connect Cys-24–Cys-145, Cys-48–Cys-133, Cys-82–Cys-98, and Cys-94–Cys-112. Active-site residues include Glu-53 and Asp-70.

This sequence belongs to the glycosyl hydrolase 22 family.

Its subcellular location is the secreted. The enzyme catalyses Hydrolysis of (1-&gt;4)-beta-linkages between N-acetylmuramic acid and N-acetyl-D-glucosamine residues in a peptidoglycan and between N-acetyl-D-glucosamine residues in chitodextrins.. Functionally, lysozymes have primarily a bacteriolytic function; those in tissues and body fluids are associated with the monocyte-macrophage system and enhance the activity of immunoagents. The protein is Lysozyme C-1 of Anas platyrhynchos (Mallard).